The chain runs to 159 residues: Phosphodiesterase delta-like protein (159 aa).

The protein belongs to the PDE6D/unc-119 family.

The chain is Phosphodiesterase delta-like protein (pdl-1) from Caenorhabditis elegans.